Here is a 180-residue protein sequence, read N- to C-terminus: dCTP deaminase, dUMP-forming (180 aa).

DCTP-binding positions include 100–105 (RSSLGR), D117, 125–127 (TLE), Q146, Y160, and Q167. The active-site Proton donor/acceptor is the E127.

This sequence belongs to the dCTP deaminase family. In terms of assembly, homotrimer.

It catalyses the reaction dCTP + 2 H2O = dUMP + NH4(+) + diphosphate. It functions in the pathway pyrimidine metabolism; dUMP biosynthesis; dUMP from dCTP: step 1/1. Functionally, bifunctional enzyme that catalyzes both the deamination of dCTP to dUTP and the hydrolysis of dUTP to dUMP without releasing the toxic dUTP intermediate. The sequence is that of dCTP deaminase, dUMP-forming from Sulfurihydrogenibium sp. (strain YO3AOP1).